The sequence spans 151 residues: Potassium/proton antiporter CemA (151 aa).

The next 2 helical transmembrane spans lie at 7-27 and 107-127; these read LPSL…SSSF and ILHF…FFLG.

The protein belongs to the CemA family.

The protein resides in the plastid. Its subcellular location is the chloroplast inner membrane. It carries out the reaction K(+)(in) + H(+)(out) = K(+)(out) + H(+)(in). Contributes to K(+)/H(+) antiport activity by supporting proton efflux to control proton extrusion and homeostasis in chloroplasts in a light-dependent manner to modulate photosynthesis. Prevents excessive induction of non-photochemical quenching (NPQ) under continuous-light conditions. Indirectly promotes efficient inorganic carbon uptake into chloroplasts. In Aegilops crassa (Persian goatgrass), this protein is Potassium/proton antiporter CemA.